Reading from the N-terminus, the 297-residue chain is Nucleotide-binding protein BMA10229_A1510 (297 aa).

Residue 8-15 (GISGSGKS) coordinates ATP. Residue 57-60 (DARS) coordinates GTP.

Belongs to the RapZ-like family.

Its function is as follows. Displays ATPase and GTPase activities. The protein is Nucleotide-binding protein BMA10229_A1510 of Burkholderia mallei (strain NCTC 10229).